Consider the following 401-residue polypeptide: MAFLSLFLCLVFSSPLMAMPPALQGRKAISPASILKGPSTDNGARDFHGRKFPHFMMQLYQNIISRRDKDLSNLEHPTLQESDTVQSFIAKSYTTVGNHWTLFFDMSSISTNNELKLAELRICLPSFGKSHSVTVEIYHTKDTKEKLFMGSFKTKISSALDADCKVFNLTMVLHNYLIRGKRLIKDEYIQAKGLLLRDLEKSAAEKGAENVDTLKQDKHHVSDFAAERIILVVFAKERSQAKPDPPSLGKQLFPLKYGMADNANKVNGFRRLRRNKKEKTRMDVGTTPPKPVEEIKPKCRKVDMFVDFQKIGWGSWIVYPKAYNAYRCESACAVPLNETDDATNYSYIKSLLPLSDTERRECPSCVPVKMRSMSMLYYENEEFILRHHEEMIVEECGFKDI.

The signal sequence occupies residues 1 to 18 (MAFLSLFLCLVFSSPLMA). Residues 19-274 (MPPALQGRKA…KVNGFRRLRR (256 aa)) constitute a propeptide that is removed on maturation. Residues asparagine 168, asparagine 337, and asparagine 344 are each glycosylated (N-linked (GlcNAc...) asparagine). Disulfide bonds link cysteine 299–cysteine 365 and cysteine 328–cysteine 396.

This sequence belongs to the TGF-beta family. In terms of assembly, monomer. The propeptide region interacts with bmp4 in a non-covalent manner. As to expression, expressed in the dorsal marginal region of late blastula, becoming restricted to the Spemann organizer at the early gastrula stage.

Its subcellular location is the secreted. Its function is as follows. Exhibits mesoderm-dorsalizing activity and neural-inducing activity, but lacks mesoderm-inducing activity. Regulates the expression of specific mesodermal and neural genes. Induces convergent extension movements at the embryonic midline by activating the fgf signaling pathway to induce t/bra expression in the organizer region. Acts with wnt11 to induce Spemann organizer cells and induce axis formation. The unprocessed protein antagonizes bmp-signaling. This Xenopus tropicalis (Western clawed frog) protein is Nodal homolog 3-B.